The sequence spans 555 residues: Transmembrane protein 87B (555 aa).

The signal sequence occupies residues 1–42 (MVAACRSVAGLLPRRRRCFPARAPLLRVALCLLCWTPAAVRA). Residues 43–214 (VPELGLWLET…PHGYISASDW (172 aa)) lie on the Lumenal side of the membrane. N-linked (GlcNAc...) asparagine glycans are attached at residues asparagine 68 and asparagine 197. A helical membrane pass occupies residues 215–235 (PLMIFYMVMCIVYILYGILWL). Over 236-247 (TWSACYWKDILR) the chain is Cytoplasmic. A helical transmembrane segment spans residues 248-268 (IQFWIAAVIFLGMLEKAVFYS). The Lumenal segment spans residues 269–299 (EYQNISNTGLSTQGLLIFAELISAIKRTLAR). An N-linked (GlcNAc...) asparagine glycan is attached at asparagine 272. A helical membrane pass occupies residues 300 to 320 (LLVIIVSLGYGIVKPRLGTVM). Topologically, residues 321-322 (HR) are cytoplasmic. Residues 323–343 (VIGLGLLYLIFAAVEGVMRVI) traverse the membrane as a helical segment. At 344 to 350 (GGSNHLA) the chain is on the lumenal side. The chain crosses the membrane as a helical span at residues 351–371 (VVLDDIILAVIDSIFVWFIFI). Residues 372–396 (SLAQTMKTLRLRKNTVKFSLYRHFK) are Cytoplasmic-facing. The helical transmembrane segment at 397-417 (NTLIFAVLASIVFMGWTTKTF) threads the bilayer. Topologically, residues 418–429 (RIAKCQSDWMER) are lumenal. A helical membrane pass occupies residues 430–450 (WVDDAFWSFLFSLILIVIMFL). Residues 451-555 (WRPSANNQRY…EKMFSSEKIM (105 aa)) are Cytoplasmic-facing. A phosphoserine mark is found at serine 469, serine 494, serine 496, and serine 534.

This sequence belongs to the LU7TM family. TMEM87 subfamily.

Its subcellular location is the golgi apparatus membrane. Functionally, may be involved in retrograde transport from endosomes to the trans-Golgi network (TGN). The sequence is that of Transmembrane protein 87B from Homo sapiens (Human).